The sequence spans 287 residues: Inorganic pyrophosphatase (287 aa).

Threonine 65 carries the phosphothreonine modification. Position 79 (arginine 79) interacts with diphosphate. The Proton donor role is filled by tyrosine 90. Positions 116, 121, and 153 each coordinate Mg(2+). Residue lysine 239 forms a Glycyl lysine isopeptide (Lys-Gly) (interchain with G-Cter in ubiquitin) linkage. Threonine 251 is subject to Phosphothreonine. Serine 266 is modified (phosphoserine). A Glycyl lysine isopeptide (Lys-Gly) (interchain with G-Cter in ubiquitin) cross-link involves residue lysine 279. The residue at position 286 (serine 286) is a Phosphoserine.

This sequence belongs to the PPase family. As to quaternary structure, homodimer. The cofactor is Mg(2+).

Its subcellular location is the cytoplasm. The catalysed reaction is diphosphate + H2O = 2 phosphate + H(+). This Saccharomyces cerevisiae (strain ATCC 204508 / S288c) (Baker's yeast) protein is Inorganic pyrophosphatase (IPP1).